Consider the following 648-residue polypeptide: Macrolide export ATP-binding/permease protein MacB (648 aa).

The Cytoplasmic segment spans residues 1–272; the sequence is MTPLLELKDI…RALAANKMRT (272 aa). Residues 5–243 enclose the ABC transporter domain; the sequence is LELKDIRRSY…TGGTEPVVNT (239 aa). 41–48 provides a ligand contact to ATP; the sequence is GASGSGKS. Residues 273–293 traverse the membrane as a helical segment; it reads LLTMLGIIIGIASVVSIVVVG. Over 294 to 522 the chain is Periplasmic; the sequence is DAAKQMVLAD…TVEKTTRTLQ (229 aa). A helical membrane pass occupies residues 523–543; sequence LFLTLVAVISLVVGGIGVMNI. At 544-575 the chain is on the cytoplasmic side; sequence MLVSVTERTREIGIRMAVGARASDVLQQFLIE. Residues 576-596 form a helical membrane-spanning segment; that stretch reads AVLVCLVGGALGITLSLLIAF. Residues 597-610 lie on the Periplasmic side of the membrane; that stretch reads TLQLFLPGWEIGFS. Residues 611–631 form a helical membrane-spanning segment; it reads PLALLLAFLCSTVTGILFGWL. Residues 632–648 are Cytoplasmic-facing; the sequence is PARNAARLDPVDALARE.

It belongs to the ABC transporter superfamily. Macrolide exporter (TC 3.A.1.122) family. In terms of assembly, homodimer. Part of the tripartite efflux system MacAB-TolC, which is composed of an inner membrane transporter, MacB, a periplasmic membrane fusion protein, MacA, and an outer membrane component, TolC. The complex forms a large protein conduit and can translocate molecules across both the inner and outer membranes. Interacts with MacA.

The protein resides in the cell inner membrane. Its activity is regulated as follows. ATPase activity is stimulated by interaction with MacA and inhibited by vanadate. Part of the tripartite efflux system MacAB-TolC. MacB is a non-canonical ABC transporter that contains transmembrane domains (TMD), which form a pore in the inner membrane, and an ATP-binding domain (NBD), which is responsible for energy generation. When overexpressed, the system confers resistance against macrolides composed of 14- and 15-membered lactones but no or weak resistance against 16-membered ones. In addition, the system could also transport R-LPS or a similar glycolipid. The sequence is that of Macrolide export ATP-binding/permease protein MacB from Escherichia coli (strain K12).